A 344-amino-acid polypeptide reads, in one-letter code: Fructose-1,6-bisphosphatase class 1 (344 aa).

Residues Glu92, Asp115, Leu117, and Asp118 each contribute to the Mg(2+) site. Substrate is bound by residues 118–121 (DGSS), Asn211, Tyr244, and Lys274. Glu280 is a Mg(2+) binding site.

This sequence belongs to the FBPase class 1 family. Homotetramer. It depends on Mg(2+) as a cofactor.

The protein resides in the cytoplasm. It carries out the reaction beta-D-fructose 1,6-bisphosphate + H2O = beta-D-fructose 6-phosphate + phosphate. It functions in the pathway carbohydrate biosynthesis; gluconeogenesis. In Aeromonas salmonicida (strain A449), this protein is Fructose-1,6-bisphosphatase class 1.